The sequence spans 235 residues: Orotidine 5'-phosphate decarboxylase (235 aa).

Substrate is bound by residues D10, K33, 60–69 (DLKMSDIPNT), T123, R185, Q194, G214, and R215. Residue K62 is the Proton donor of the active site.

This sequence belongs to the OMP decarboxylase family. Type 1 subfamily. In terms of assembly, homodimer.

The enzyme catalyses orotidine 5'-phosphate + H(+) = UMP + CO2. It functions in the pathway pyrimidine metabolism; UMP biosynthesis via de novo pathway; UMP from orotate: step 2/2. In terms of biological role, catalyzes the decarboxylation of orotidine 5'-monophosphate (OMP) to uridine 5'-monophosphate (UMP). This is Orotidine 5'-phosphate decarboxylase from Lactobacillus gasseri (strain ATCC 33323 / DSM 20243 / BCRC 14619 / CIP 102991 / JCM 1131 / KCTC 3163 / NCIMB 11718 / NCTC 13722 / AM63).